Consider the following 721-residue polypeptide: Catalase-peroxidase 1 (721 aa).

Positions 98-223 (WHAAGSYRVA…LAAVQMGLIY (126 aa)) form a cross-link, tryptophyl-tyrosyl-methioninium (Trp-Tyr) (with M-249). Residue H99 is the Proton acceptor of the active site. Positions 223-249 (YVNPEGVNGQPDPLRTAQDVRVTFGRM) form a cross-link, tryptophyl-tyrosyl-methioninium (Tyr-Met) (with W-98). H264 contributes to the heme b binding site.

It belongs to the peroxidase family. Peroxidase/catalase subfamily. In terms of assembly, homodimer or homotetramer. Requires heme b as cofactor. Formation of the three residue Trp-Tyr-Met cross-link is important for the catalase, but not the peroxidase activity of the enzyme.

The enzyme catalyses H2O2 + AH2 = A + 2 H2O. It carries out the reaction 2 H2O2 = O2 + 2 H2O. Its function is as follows. Bifunctional enzyme with both catalase and broad-spectrum peroxidase activity. This Legionella pneumophila (strain Corby) protein is Catalase-peroxidase 1.